The sequence spans 465 residues: Opioid growth factor receptor-like protein 1 (465 aa).

2 disordered regions span residues 1–89 (MGNL…GNAK) and 309–465 (ENFI…TSSG). Basic and acidic residues-rich tracts occupy residues 48 to 59 (REQPEQPPERAG), 316 to 325 (PKKEQPERSK), 363 to 396 (TVEEKKVASREPGEETDKPSPEASSEDTKPRNSE), and 426 to 440 (SEKDGEGENQSKDSE). A compositionally biased stretch (polar residues) spans 442 to 465 (PENTSCHAEVVSQQNVTNPQTSSG).

The protein belongs to the opioid growth factor receptor family.

The protein is Opioid growth factor receptor-like protein 1 (Ogfrl1) of Rattus norvegicus (Rat).